We begin with the raw amino-acid sequence, 570 residues long: Sulfite reductase [NADPH] hemoprotein beta-component (570 aa).

Residues C434, C440, C479, and C483 each coordinate [4Fe-4S] cluster. C483 provides a ligand contact to siroheme.

It belongs to the nitrite and sulfite reductase 4Fe-4S domain family. In terms of assembly, alpha(8)-beta(8). The alpha component is a flavoprotein, the beta component is a hemoprotein. Requires siroheme as cofactor. [4Fe-4S] cluster serves as cofactor.

It catalyses the reaction hydrogen sulfide + 3 NADP(+) + 3 H2O = sulfite + 3 NADPH + 4 H(+). The protein operates within sulfur metabolism; hydrogen sulfide biosynthesis; hydrogen sulfide from sulfite (NADPH route): step 1/1. In terms of biological role, component of the sulfite reductase complex that catalyzes the 6-electron reduction of sulfite to sulfide. This is one of several activities required for the biosynthesis of L-cysteine from sulfate. In Escherichia fergusonii (strain ATCC 35469 / DSM 13698 / CCUG 18766 / IAM 14443 / JCM 21226 / LMG 7866 / NBRC 102419 / NCTC 12128 / CDC 0568-73), this protein is Sulfite reductase [NADPH] hemoprotein beta-component.